The sequence spans 302 residues: Acidic endochitinase (302 aa).

The signal sequence occupies residues 1–30; the sequence is MTNMTLRKHVIYFLFFISCSLSKPSDASRG. Residues 31–302 enclose the GH18 domain; sequence GIAIYWGQNG…GYSSSILASV (272 aa). Intrachain disulfides connect Cys-49/Cys-96 and Cys-79/Cys-86. Residue Glu-156 is the Proton donor of the active site. Cysteines 188 and 217 form a disulfide.

Belongs to the glycosyl hydrolase 18 family. Chitinase class III subfamily.

Its subcellular location is the secreted. It localises to the extracellular space. It carries out the reaction Random endo-hydrolysis of N-acetyl-beta-D-glucosaminide (1-&gt;4)-beta-linkages in chitin and chitodextrins.. This protein functions as a defense against chitin containing fungal pathogens. The protein is Acidic endochitinase (CHIB1) of Arabidopsis thaliana (Mouse-ear cress).